Consider the following 1117-residue polypeptide: Cytospin-A (1117 aa).

Disordered stretches follow at residues 1 to 176, 293 to 323, and 358 to 390; these read MKKA…NQIS, SLSP…GSVE, and SSDD…NASE. The span at 45–90 shows a compositional bias: low complexity; it reads TAASLSKTKSSDDLLAGMAGGVTVTNGVKGKKSTCPSAAPSASAPA. The segment covering 93–117 has biased composition (polar residues); the sequence is TVENKSKISTGTASSTKRSTSTGNK. Composition is skewed to basic and acidic residues over residues 120–131 and 158–171; these read SSTRERLRERTR and TATE…KSKS. The stretch at 168–280 forms a coiled coil; that stretch reads KSKSDNQISD…LNALGFSLEQ (113 aa). The span at 293–303 shows a compositional bias: polar residues; sequence SLSPEITPGNQ. Residues 358–377 show a composition bias toward low complexity; the sequence is SSDDALDAPSSSESEGIPSI. A phosphoserine mark is found at Ser384, Ser385, and Ser389. Coiled coils occupy residues 394 to 449 and 487 to 807; these read ACLT…MESL and RYME…RGRV. Phosphoserine occurs at positions 868, 881, and 887. A disordered region spans residues 920-997; that stretch reads TSSASRPASL…PTTRSRIREE (78 aa). Residues 946-956 are compositionally biased toward basic and acidic residues; it reads RSSEEVKRDIS. Low complexity predominate over residues 971 to 990; sequence TTSPQLSLSSSPTASVTPTT. One can recognise a Calponin-homology (CH) domain in the interval 1011 to 1116; that stretch reads GSKRNALLKW…YVTAIYKYFE (106 aa).

Belongs to the cytospin-A family. As to quaternary structure, may interact with both microtubules and actin cytoskeleton.

Its subcellular location is the cytoplasm. The protein localises to the cytoskeleton. The protein resides in the spindle. It is found in the cell junction. It localises to the gap junction. In terms of biological role, involved in cytokinesis and spindle organization. May play a role in actin cytoskeleton organization and microtubule stabilization and hence required for proper cell adhesion and migration. The polypeptide is Cytospin-A (SPECC1L) (Homo sapiens (Human)).